A 332-amino-acid polypeptide reads, in one-letter code: Probable cytosolic iron-sulfur protein assembly protein 1 (332 aa).

WD repeat units lie at residues 9–48 (GHTD…LVTT), 52–93 (GHNR…WQFL), 98–137 (GHEN…DEFE), 144–183 (DHTQ…WICV), 188–230 (GHES…GGTG), 257–295 (AHTR…QWVV), and 302–332 (AHGV…IWEV).

This sequence belongs to the WD repeat CIA1 family. As to quaternary structure, interacts with NAR1.

The protein resides in the cytoplasm. It is found in the nucleus. Essential component of the cytosolic iron-sulfur (Fe/S) protein assembly machinery. Required for the maturation of extramitochondrial Fe/S proteins. The chain is Probable cytosolic iron-sulfur protein assembly protein 1 from Yarrowia lipolytica (strain CLIB 122 / E 150) (Yeast).